The following is a 94-amino-acid chain: Gibberellin-regulated protein 11 (94 aa).

An N-terminal signal peptide occupies residues 1-23 (MAVFRVLLASLLISLLVLDFVHA).

This sequence belongs to the GASA family. Post-translationally, six disulfide bonds may be present.

Its subcellular location is the secreted. Gibberellin-regulated protein that may function in hormonal controlled steps of development such as seed germination, flowering and seed maturation. The chain is Gibberellin-regulated protein 11 (GASA11) from Arabidopsis thaliana (Mouse-ear cress).